The sequence spans 288 residues: Polyamine aminopropyltransferase (288 aa).

The region spanning 9-238 (ETLHDQFGQY…GIMTFAWATD (230 aa)) is the PABS domain. Residue Q33 coordinates S-methyl-5'-thioadenosine. H64 and D88 together coordinate spermidine. S-methyl-5'-thioadenosine contacts are provided by residues E108 and 140-141 (DG). D158 acts as the Proton acceptor in catalysis. 158–161 (DCTD) is a spermidine binding site. P165 contributes to the S-methyl-5'-thioadenosine binding site.

It belongs to the spermidine/spermine synthase family. Homodimer or homotetramer.

The protein resides in the cytoplasm. The catalysed reaction is S-adenosyl 3-(methylsulfanyl)propylamine + putrescine = S-methyl-5'-thioadenosine + spermidine + H(+). It functions in the pathway amine and polyamine biosynthesis; spermidine biosynthesis; spermidine from putrescine: step 1/1. Its function is as follows. Catalyzes the irreversible transfer of a propylamine group from the amino donor S-adenosylmethioninamine (decarboxy-AdoMet) to putrescine (1,4-diaminobutane) to yield spermidine. In Escherichia coli O81 (strain ED1a), this protein is Polyamine aminopropyltransferase.